The primary structure comprises 154 residues: 6,7-dimethyl-8-ribityllumazine synthase (154 aa).

5-amino-6-(D-ribitylamino)uracil contacts are provided by residues F26, 60–62 (ALE), and 84–86 (CII). A (2S)-2-hydroxy-3-oxobutyl phosphate-binding site is contributed by 89–90 (ET). H92 acts as the Proton donor in catalysis. N117 provides a ligand contact to 5-amino-6-(D-ribitylamino)uracil. Position 131 (R131) interacts with (2S)-2-hydroxy-3-oxobutyl phosphate.

Belongs to the DMRL synthase family.

It carries out the reaction (2S)-2-hydroxy-3-oxobutyl phosphate + 5-amino-6-(D-ribitylamino)uracil = 6,7-dimethyl-8-(1-D-ribityl)lumazine + phosphate + 2 H2O + H(+). The protein operates within cofactor biosynthesis; riboflavin biosynthesis; riboflavin from 2-hydroxy-3-oxobutyl phosphate and 5-amino-6-(D-ribitylamino)uracil: step 1/2. Functionally, catalyzes the formation of 6,7-dimethyl-8-ribityllumazine by condensation of 5-amino-6-(D-ribitylamino)uracil with 3,4-dihydroxy-2-butanone 4-phosphate. This is the penultimate step in the biosynthesis of riboflavin. The chain is 6,7-dimethyl-8-ribityllumazine synthase from Acidovorax ebreus (strain TPSY) (Diaphorobacter sp. (strain TPSY)).